A 255-amino-acid chain; its full sequence is tRNA (guanine-N(1)-)-methyltransferase (255 aa).

Residues G117 and 137-142 contribute to the S-adenosyl-L-methionine site; that span reads IGDYVL.

The protein belongs to the RNA methyltransferase TrmD family. In terms of assembly, homodimer.

The protein localises to the cytoplasm. The enzyme catalyses guanosine(37) in tRNA + S-adenosyl-L-methionine = N(1)-methylguanosine(37) in tRNA + S-adenosyl-L-homocysteine + H(+). In terms of biological role, specifically methylates guanosine-37 in various tRNAs. The protein is tRNA (guanine-N(1)-)-methyltransferase of Glaesserella parasuis serovar 5 (strain SH0165) (Haemophilus parasuis).